Reading from the N-terminus, the 556-residue chain is Urocanate hydratase (556 aa).

NAD(+)-binding positions include 52–53 (GG), Gln-130, 176–178 (GMG), Glu-196, Arg-201, 242–243 (NA), 263–267 (QTSAH), 273–274 (YL), and Tyr-322. The active site involves Cys-410. Gly-492 provides a ligand contact to NAD(+).

This sequence belongs to the urocanase family. The cofactor is NAD(+).

It is found in the cytoplasm. It carries out the reaction 4-imidazolone-5-propanoate = trans-urocanate + H2O. It participates in amino-acid degradation; L-histidine degradation into L-glutamate; N-formimidoyl-L-glutamate from L-histidine: step 2/3. Catalyzes the conversion of urocanate to 4-imidazolone-5-propionate. The chain is Urocanate hydratase from Shewanella sp. (strain MR-7).